We begin with the raw amino-acid sequence, 422 residues long: Mitogen-activated protein kinase spm1 (422 aa).

The region spanning Phe21–Leu314 is the Protein kinase domain. Residues Leu27–Val35 and Lys52 each bind ATP. Asp149 functions as the Proton acceptor in the catalytic mechanism. At Thr186 the chain carries Phosphothreonine. A TXY motif is present at residues Thr186–Tyr188. Tyr188 carries the phosphotyrosine modification. The interval Arg359–Asn422 is disordered. Residues Pro364–Pro379 are compositionally biased toward polar residues. Over residues Ser380–Ser397 the composition is skewed to low complexity. Over residues Ala411–Asn422 the composition is skewed to basic and acidic residues.

The protein belongs to the protein kinase superfamily. CMGC Ser/Thr protein kinase family. MAP kinase subfamily. Mg(2+) is required as a cofactor. Dually phosphorylated on Thr-186 and Tyr-188, which activates the enzyme.

The catalysed reaction is L-seryl-[protein] + ATP = O-phospho-L-seryl-[protein] + ADP + H(+). It carries out the reaction L-threonyl-[protein] + ATP = O-phospho-L-threonyl-[protein] + ADP + H(+). Its activity is regulated as follows. Activated by tyrosine and threonine phosphorylation by skh1/pek1. Regulates cell integrity and functions coordinately with the protein kinase C pathway (pck1 and pck2). Involved the regulation of wall architecture, cell shape, cytokinesis in exponential and stationary phase, and metabolism of ions. The chain is Mitogen-activated protein kinase spm1 (spm1) from Schizosaccharomyces pombe (strain 972 / ATCC 24843) (Fission yeast).